The sequence spans 212 residues: N-(5'-phosphoribosyl)anthranilate isomerase (212 aa).

Belongs to the TrpF family.

The enzyme catalyses N-(5-phospho-beta-D-ribosyl)anthranilate = 1-(2-carboxyphenylamino)-1-deoxy-D-ribulose 5-phosphate. It participates in amino-acid biosynthesis; L-tryptophan biosynthesis; L-tryptophan from chorismate: step 3/5. The polypeptide is N-(5'-phosphoribosyl)anthranilate isomerase (Microcystis aeruginosa (strain NIES-843 / IAM M-2473)).